Here is a 225-residue protein sequence, read N- to C-terminus: UPF0758 protein BCQ_4241 (225 aa).

In terms of domain architecture, MPN spans 103 to 225 (SIRSPEDCAR…FVSLKEKGHI (123 aa)). Zn(2+) contacts are provided by H174, H176, and D187. The JAMM motif signature appears at 174–187 (HNHPSGDPAPSRED).

This sequence belongs to the UPF0758 family.

This is UPF0758 protein BCQ_4241 from Bacillus cereus (strain Q1).